Reading from the N-terminus, the 465-residue chain is MNSPASVAPILPDTIFRAYDIRGVVEDTLNAETAYWIGRAIGSESLAQNEPNVSVGRDGRLSGPELVQQLIQGLHDSGCHVSDVGLVPTPALYYAANVLAGKTGVMLTGSHNPKDYNGFKIVIAGDTLANEQIQALHERIKTNNLTSQKGSITQVNILDRYFKQIKDDIVMARKLKVVVDCGNGAAGVIAPQLIEALGCEVISLFAEVDGNFPNHHPDPGKLENLQDLIAKVKETGADLGLAFDGDGDRVGVVTNAGNVVYPDRLLMLFALDVLKRNPGADIIFDVKCTRRLTPLISEHGGRPVMWKTGHSLIKKEMKKSGALLAGEMSGHIFFKERWFGFDDGIYSAARLLEILSQEPANAEDLFETFPNDISTPEINIKVTDVTKFSIIEALEKDAQWGDAKLTTIDGVRVDYPKGWGLVRASNTTPVLVLRFEAETQAELERIQGVFHAELKKVAPDLDLPF.

Residue Ser110 is the Phosphoserine intermediate of the active site. Mg(2+)-binding residues include Ser110, Asp244, Asp246, and Asp248. Residues Glu327, Ser329, and His331 each coordinate substrate.

It belongs to the phosphohexose mutase family. As to quaternary structure, monomer. Mg(2+) serves as cofactor.

It carries out the reaction alpha-D-mannose 1-phosphate = D-mannose 6-phosphate. The catalysed reaction is alpha-D-glucose 1-phosphate = alpha-D-glucose 6-phosphate. It functions in the pathway nucleotide-sugar biosynthesis; GDP-alpha-D-mannose biosynthesis; alpha-D-mannose 1-phosphate from D-fructose 6-phosphate: step 2/2. It participates in bacterial outer membrane biogenesis; lipopolysaccharide biosynthesis. The phosphomannomutase activity produces a precursor for alginate polymerization. The alginate layer causes a mucoid phenotype and provides a protective barrier against host immune defenses and antibiotics. Also involved in core-LPS biosynthesis due to its phosphoglucomutase activity. Essential for biofilm production. The polypeptide is Phosphomannomutase/phosphoglucomutase (algC) (Pseudomonas syringae pv. tomato (strain ATCC BAA-871 / DC3000)).